The chain runs to 122 residues: Large ribosomal subunit protein uL14 (122 aa).

The protein belongs to the universal ribosomal protein uL14 family. In terms of assembly, part of the 50S ribosomal subunit. Forms a cluster with proteins L3 and L19. In the 70S ribosome, L14 and L19 interact and together make contacts with the 16S rRNA in bridges B5 and B8.

Functionally, binds to 23S rRNA. Forms part of two intersubunit bridges in the 70S ribosome. The sequence is that of Large ribosomal subunit protein uL14 from Baumannia cicadellinicola subsp. Homalodisca coagulata.